The following is a 467-amino-acid chain: Inactive pancreatic lipase-related protein 1 (467 aa).

Positions 1–17 (MLIFWTITLFLLGAAKG) are cleaved as a signal peptide. Disulfide bonds link C21–C27 and C109–C120. The active-site Nucleophile is S171. The Charge relay system role is filled by D194. Ca(2+)-binding residues include E205, R208, D210, and D213. C255 and C279 form a disulfide bridge. H281 functions as the Charge relay system in the catalytic mechanism. 3 disulfide bridges follow: C303/C314, C317/C322, and C451/C467. The PLAT domain occupies 356 to 467 (WRYGVSITLS…EDTLLTLTPC (112 aa)).

Belongs to the AB hydrolase superfamily. Lipase family. Pancreas.

It is found in the secreted. In terms of biological role, may function as inhibitor of dietary triglyceride digestion. Lacks detectable lipase activity towards triglycerides, diglycerides, phosphatidylcholine, galactolipids or cholesterol esters (in vitro). In Homo sapiens (Human), this protein is Inactive pancreatic lipase-related protein 1 (PNLIPRP1).